We begin with the raw amino-acid sequence, 445 residues long: Probable cytosol aminopeptidase (445 aa).

Positions 217 and 222 each coordinate Mn(2+). Lys229 is a catalytic residue. Positions 240, 299, and 301 each coordinate Mn(2+). The active site involves Arg303.

The protein belongs to the peptidase M17 family. The cofactor is Mn(2+).

It is found in the cytoplasm. The enzyme catalyses Release of an N-terminal amino acid, Xaa-|-Yaa-, in which Xaa is preferably Leu, but may be other amino acids including Pro although not Arg or Lys, and Yaa may be Pro. Amino acid amides and methyl esters are also readily hydrolyzed, but rates on arylamides are exceedingly low.. The catalysed reaction is Release of an N-terminal amino acid, preferentially leucine, but not glutamic or aspartic acids.. Its function is as follows. Presumably involved in the processing and regular turnover of intracellular proteins. Catalyzes the removal of unsubstituted N-terminal amino acids from various peptides. The chain is Probable cytosol aminopeptidase (pepA) from Mycoplasma pneumoniae (strain ATCC 29342 / M129 / Subtype 1) (Mycoplasmoides pneumoniae).